Reading from the N-terminus, the 562-residue chain is Alpha-amylase 2 (562 aa).

Asparagine 236 lines the Ca(2+) pocket. Aspartate 309 (nucleophile) is an active-site residue. Glutamate 338 acts as the Proton donor in catalysis.

This sequence belongs to the glycosyl hydrolase 13 family. Monomer. Ca(2+) serves as cofactor.

It is found in the cytoplasm. The enzyme catalyses Endohydrolysis of (1-&gt;4)-alpha-D-glucosidic linkages in polysaccharides containing three or more (1-&gt;4)-alpha-linked D-glucose units.. The chain is Alpha-amylase 2 (amyB) from Dictyoglomus thermophilum (strain ATCC 35947 / DSM 3960 / H-6-12).